Reading from the N-terminus, the 154-residue chain is IQ domain-containing protein F3 (154 aa).

In terms of domain architecture, IQ spans Gln89–Leu118.

The polypeptide is IQ domain-containing protein F3 (IQCF3) (Homo sapiens (Human)).